The primary structure comprises 441 residues: MSECDKELVDMVWGRNNSNGLADSVFKRWTQGFVFSASEPTALEQFEGGPCAVLAPVQAFLLKRQLFNTEHSNWRSCQDEEQKEILCHTLSDILEIVSFNSNSYCLASWLKEKATRETEQENPAESSQQNEQPTALAAEELGFERFHASIQKRKFNSLSELKEAVLETYSTWRNKYGVLLFLYSVILTKGIENVKNEIEDAERPLIDPVYGHGSQSLINLLLTGHAVSNVWDGDRECSGMKLQGIHSHADVGFLTILESLRFCKVGSFLKSPKFPIWVIGSETHLTVFFTKEMALVAPEAPSEQARRVFETYDPEDNGFIPDAVLEDVMKALDLVSDTDYVNLMKTKLDPEGLGIILLGPFLLEFFPEQSSKVPESFTVYHYNGLRQSNHNEKVAYIEGTAVMGFEDPRLQTDDTPVKCCLQTKWPFVELLWSADRPPSLI.

Cys-51 (nucleophile) is an active-site residue. His-284 functions as the Proton acceptor in the catalytic mechanism.

The protein belongs to the MINDY deubiquitinase family. FAM188 subfamily.

The protein resides in the nucleus. The catalysed reaction is Thiol-dependent hydrolysis of ester, thioester, amide, peptide and isopeptide bonds formed by the C-terminal Gly of ubiquitin (a 76-residue protein attached to proteins as an intracellular targeting signal).. Functionally, hydrolase that can remove 'Lys-48'-linked conjugated ubiquitin from proteins. This Xenopus tropicalis (Western clawed frog) protein is Ubiquitin carboxyl-terminal hydrolase MINDY-3 (mindy3).